Here is a 142-residue protein sequence, read N- to C-terminus: Small ribosomal subunit protein uS12 (142 aa).

This sequence belongs to the universal ribosomal protein uS12 family. Part of the 30S ribosomal subunit.

Its function is as follows. With S4 and S5 plays an important role in translational accuracy. Located at the interface of the 30S and 50S subunits. This is Small ribosomal subunit protein uS12 from Methanothrix thermoacetophila (strain DSM 6194 / JCM 14653 / NBRC 101360 / PT) (Methanosaeta thermophila).